Reading from the N-terminus, the 132-residue chain is uncharacterized protein (132 aa).

Positions 39–93 (HPAGASEALGALPPPRQLVEKRRVSPPRRLDQSGRDGGAVAKCSLSRGLSPPGWT) are disordered. The segment covering 56-72 (LVEKRRVSPPRRLDQSG) has biased composition (basic and acidic residues).

This is an uncharacterized protein from Homo sapiens (Human).